Reading from the N-terminus, the 337-residue chain is Aspartate carbamoyltransferase catalytic subunit (337 aa).

Arginine 57 and threonine 58 together coordinate carbamoyl phosphate. Lysine 86 serves as a coordination point for L-aspartate. Arginine 107, histidine 135, and glutamine 138 together coordinate carbamoyl phosphate. Arginine 172 and arginine 234 together coordinate L-aspartate. Positions 274 and 275 each coordinate carbamoyl phosphate.

This sequence belongs to the aspartate/ornithine carbamoyltransferase superfamily. ATCase family. Heterododecamer (2C3:3R2) of six catalytic PyrB chains organized as two trimers (C3), and six regulatory PyrI chains organized as three dimers (R2).

It carries out the reaction carbamoyl phosphate + L-aspartate = N-carbamoyl-L-aspartate + phosphate + H(+). Its pathway is pyrimidine metabolism; UMP biosynthesis via de novo pathway; (S)-dihydroorotate from bicarbonate: step 2/3. In terms of biological role, catalyzes the condensation of carbamoyl phosphate and aspartate to form carbamoyl aspartate and inorganic phosphate, the committed step in the de novo pyrimidine nucleotide biosynthesis pathway. This is Aspartate carbamoyltransferase catalytic subunit from Saccharophagus degradans (strain 2-40 / ATCC 43961 / DSM 17024).